Reading from the N-terminus, the 300-residue chain is PAK4-inhibitor INKA2 (300 aa).

Disordered regions lie at residues 59-104 (GGTP…SSPK), 178-201 (LEKG…GQSR), and 230-288 (KEKP…LEPS). Residues 60 to 73 (GTPTFSCPESSQEQ) show a composition bias toward polar residues. Low complexity predominate over residues 93 to 102 (SSSQPSFDSS). The interval 140–183 (EPDDWTSTLMSRGRNRQPLVLGDNVFADLVGNWLDLPELEKGGE) is inka box. Residues 246–256 (GRSKKVKKRSL) show a composition bias toward basic residues.

Belongs to the INKA family. As to quaternary structure, interacts with PAK4. As to expression, enriched in the nervous system.

It localises to the nucleus. Functionally, inhibitor of the serine/threonine-protein kinase PAK4. Acts by binding PAK4 in a substrate-like manner, inhibiting the protein kinase activity. This is PAK4-inhibitor INKA2 from Mus musculus (Mouse).